Consider the following 757-residue polypeptide: RNA-directed RNA polymerase catalytic subunit (757 aa).

The segment at 50–82 (SEKGKWTTNTETGAPQLNPIDGPLPEDNEPSGY) is disordered. The segment covering 55 to 64 (WTTNTETGAP) has biased composition (polar residues). 2 short sequence motifs (nuclear localization signal) span residues 187-195 (RKRRVRDNM) and 203-216 (RTIGKKKQRVNKRS). Residues 249 to 256 (RGFVYFVE) are promoter-binding site. One can recognise a RdRp catalytic domain in the interval 286–483 (VRKMMTNSQD…GINMSKKKSY (198 aa)).

This sequence belongs to the influenza viruses polymerase PB1 family. Influenza RNA polymerase is composed of three subunits: PB1, PB2 and PA. Interacts (via N-terminus) with PA (via C-terminus). Interacts (via C-terminus) with PB2 (via N-terminus); this interaction is essential for transcription initiation. Interacts (via C-terminus) with human PKP2 (via N-terminus); the interaction competitively inhibits the interaction between the RNA polymerase subunits PB1 and PB2. Post-translationally, phosphorylated by host PRKCA.

The protein resides in the host nucleus. It is found in the host cytoplasm. The catalysed reaction is RNA(n) + a ribonucleoside 5'-triphosphate = RNA(n+1) + diphosphate. RNA-dependent RNA polymerase which is responsible for replication and transcription of virus RNA segments. The transcription of viral mRNAs occurs by a unique mechanism called cap-snatching. 5' methylated caps of cellular mRNAs are cleaved after 10-13 nucleotides by PA. In turn, these short capped RNAs are used as primers by PB1 for transcription of viral mRNAs. During virus replication, PB1 initiates RNA synthesis and copy vRNA into complementary RNA (cRNA) which in turn serves as a template for the production of more vRNAs. In Influenza A virus (strain A/Kiev/59/1979 H1N1), this protein is RNA-directed RNA polymerase catalytic subunit.